The sequence spans 291 residues: MTTLAIDIGGTKLAAALIDKNLRISQRRELPTPASKTPDALREALKALVEPLRAEARQVAIASTGIIQEGMLLALNPHNLGGLLHFPLVQTLETIAGLPTLAVNDAQAAAWAEYHALPDDIRDMVFITVSTGVGGGVVCDCKLLTGKGGLAGHLGHTLADPHGPVCGCGRVGCVEAIASGRGMAAAARDDLAGCDAKTLFIRAGEGHQQARHLVSQSAQVIARMIADVKATTDCQCVVIGGSVGLAEGYLEQVRAFLMQEPAPYHVALSAARYRHDAGLLGAALLAQGDTL.

ATP-binding positions include 5–12 (AIDIGGTK) and 132–139 (GVGGGVVC). Zn(2+)-binding residues include histidine 156, cysteine 166, cysteine 168, and cysteine 173.

This sequence belongs to the ROK (NagC/XylR) family. NanK subfamily. Homodimer.

It catalyses the reaction an N-acyl-D-mannosamine + ATP = an N-acyl-D-mannosamine 6-phosphate + ADP + H(+). It functions in the pathway amino-sugar metabolism; N-acetylneuraminate degradation; D-fructose 6-phosphate from N-acetylneuraminate: step 2/5. Its function is as follows. Catalyzes the phosphorylation of N-acetylmannosamine (ManNAc) to ManNAc-6-P. The chain is N-acetylmannosamine kinase from Salmonella gallinarum (strain 287/91 / NCTC 13346).